Consider the following 726-residue polypeptide: Peroxisomal bifunctional enzyme (726 aa).

Residues 1 to 284 (MAEYLRLPHS…FAERSAPKWS (284 aa)) are enoyl-CoA hydratase / isomerase. K38 carries the post-translational modification N6-succinyllysine. G103 provides a ligand contact to substrate. The residue at position 167 (K167) is an N6-acetyllysine; alternate. N6-succinyllysine; alternate is present on K167. Position 173 is an N6-acetyllysine (K173). K185 is subject to N6-succinyllysine. The residue at position 221 (K221) is an N6-acetyllysine; alternate. At K221 the chain carries N6-succinyllysine; alternate. N6-succinyllysine occurs at positions 282, 292, and 333. Positions 285–575 (TPSGASWKTA…DMLCELGRFG (291 aa)) are 3-hydroxyacyl-CoA dehydrogenase. 2 positions are modified to N6-acetyllysine: K348 and K352. Residues 352–371 (KSRQQCGQQRSGPKPRFSSS) form a disordered region. The segment covering 353 to 371 (SRQQCGQQRSGPKPRFSSS) has biased composition (polar residues). K467 carries the N6-acetyllysine modification. K535 carries the N6-succinyllysine modification. K587, K594, and K713 each carry N6-acetyllysine; alternate. K587, K594, and K713 each carry N6-succinyllysine; alternate. The Microbody targeting signal signature appears at 724 to 726 (SKL). An N6-succinyllysine modification is found at K725.

The protein in the N-terminal section; belongs to the enoyl-CoA hydratase/isomerase family. In the C-terminal section; belongs to the 3-hydroxyacyl-CoA dehydrogenase family. As to quaternary structure, monomer. Acetylated, leading to enhanced enzyme activity. Acetylation is enhanced by up to 80% after treatment either with trichostin A (TSA) or with nicotinamide (NAM) with highest increase on Lys-348. Acetylation and enzyme activity increased by about 1.5% on addition of fatty acids.

It is found in the peroxisome. The catalysed reaction is a (3S)-3-hydroxyacyl-CoA = a (2E)-enoyl-CoA + H2O. It carries out the reaction a 4-saturated-(3S)-3-hydroxyacyl-CoA = a (3E)-enoyl-CoA + H2O. The enzyme catalyses a (3Z)-enoyl-CoA = a 4-saturated (2E)-enoyl-CoA. It catalyses the reaction a (3E)-enoyl-CoA = a 4-saturated (2E)-enoyl-CoA. The catalysed reaction is a (3S)-3-hydroxyacyl-CoA + NAD(+) = a 3-oxoacyl-CoA + NADH + H(+). It carries out the reaction (2S,3S)-3-hydroxy-2-methylbutanoyl-CoA = (2E)-2-methylbut-2-enoyl-CoA + H2O. The enzyme catalyses (3S)-hydroxyhexadecanoyl-CoA + NAD(+) = 3-oxohexadecanoyl-CoA + NADH + H(+). It catalyses the reaction (3S)-hydroxyhexadecanoyl-CoA = (2E)-hexadecenoyl-CoA + H2O. The catalysed reaction is (2E)-hexadecenedioyl-CoA + H2O = (3S)-hydroxyhexadecanedioyl-CoA. It carries out the reaction (3S)-hydroxyhexadecanedioyl-CoA + NAD(+) = 3-oxohexadecanedioyl-CoA + NADH + H(+). The enzyme catalyses (3E,5Z)-tetradecadienoyl-CoA = (2E,5Z)-tetradecadienoyl-CoA. It catalyses the reaction (3E,5Z)-octadienoyl-CoA = (2E,5Z)-octadienoyl-CoA. The catalysed reaction is (3S)-hydroxydecanoyl-CoA + NAD(+) = 3-oxodecanoyl-CoA + NADH + H(+). It carries out the reaction (3E)-decenoyl-CoA = (2E)-decenoyl-CoA. The enzyme catalyses (3Z)-hexenoyl-CoA = (2E)-hexenoyl-CoA. It catalyses the reaction (3E)-hexenoyl-CoA = (2E)-hexenoyl-CoA. The catalysed reaction is (3S)-hydroxydecanoyl-CoA = (2E)-decenoyl-CoA + H2O. It carries out the reaction (3S)-hydroxyhexanoyl-CoA = (2E)-hexenoyl-CoA + H2O. It functions in the pathway lipid metabolism; fatty acid beta-oxidation. Its activity is regulated as follows. Enzyme activity enhanced by acetylation. Peroxisomal trifunctional enzyme possessing 2-enoyl-CoA hydratase, 3-hydroxyacyl-CoA dehydrogenase, and delta 3, delta 2-enoyl-CoA isomerase activities. Catalyzes two of the four reactions of the long chain fatty acids peroxisomal beta-oxidation pathway. Can also use branched-chain fatty acids such as 2-methyl-2E-butenoyl-CoA as a substrate, which is hydrated into (2S,3S)-3-hydroxy-2-methylbutanoyl-CoA. Optimal isomerase for 2,5 double bonds into 3,5 form isomerization in a range of enoyl-CoA species. Also able to isomerize both 3-cis and 3-trans double bonds into the 2-trans form in a range of enoyl-CoA species. Regulates the amount of medium-chain dicarboxylic fatty acids which are essential regulators of all fatty acid oxidation pathways. Also involved in the degradation of long-chain dicarboxylic acids through peroxisomal beta-oxidation. In Cavia porcellus (Guinea pig), this protein is Peroxisomal bifunctional enzyme (EHHADH).